We begin with the raw amino-acid sequence, 500 residues long: Lysine--tRNA ligase (500 aa).

2 residues coordinate Mg(2+): E410 and E417.

The protein belongs to the class-II aminoacyl-tRNA synthetase family. In terms of assembly, homodimer. Mg(2+) serves as cofactor.

Its subcellular location is the cytoplasm. It carries out the reaction tRNA(Lys) + L-lysine + ATP = L-lysyl-tRNA(Lys) + AMP + diphosphate. The protein is Lysine--tRNA ligase of Shewanella denitrificans (strain OS217 / ATCC BAA-1090 / DSM 15013).